The primary structure comprises 161 residues: Small ribosomal subunit protein uS9 (161 aa).

It belongs to the universal ribosomal protein uS9 family.

The chain is Small ribosomal subunit protein uS9 from Bartonella henselae (strain ATCC 49882 / DSM 28221 / CCUG 30454 / Houston 1) (Rochalimaea henselae).